The chain runs to 607 residues: MMWKNIAGLSKAAAAARTHGSRRCFSTAIPGPCIVHKRGADILHDPWFNKDTGFPLTERDRLGIRGLLPPRVMTCVQQCDRFIESFRSLENNTKGEPENVVALAKWRMLNRLHDRNETLYYRVLIDNIKDFAPIIYTPTVGLVCQNYSGLYRRPRGMYFSAKDKGEMMSMIYNWPAPQVDMIVITDGSRILGLGDLGVQGIGIPIGKLDMYVAAAGINPQRVLPIMLDVGTNNEKLLQNDLYLGVRQPRLEGEEYLEIIDEFMEAAFTRWPKAVVQFEDFQAKWAFGTLERYRKKFCMFNDDVQGTAGVALAGLLGTVRAQGRPISDFVNQKIVVVGAGSAGLGVTKMAVQAVARMAGISESEATKNFYLIDKDGLVTTERTKLDPGAVLFAKNPAEIREGASIVEVVKKVRPHVLLGLSGVGGIFNEEVLKAMRESDSCKPAIFAMSNPTLNAECTAADAFKHAGGNIVFASGSPFENVELENGKVGHVNQANNMYLFPGIGLGTLLSGARIVTDGMLQAASECLASYMTDEEVQKGILYPSINNIRHITAEVGAAVLRAAVTDDIAEGHGDVGPKDLSHMSKEDTVNYITRNMWFPVYSPLVHEK.

The N-terminal 32 residues, 1–32 (MMWKNIAGLSKAAAAARTHGSRRCFSTAIPGP), are a transit peptide targeting the mitochondrion. Y136 acts as the Proton donor in catalysis. Residue R189 coordinates NAD(+). K207 serves as the catalytic Proton acceptor. Positions 278, 279, and 302 each coordinate a divalent metal cation. Residues D302 and N449 each contribute to the NAD(+) site.

It belongs to the malic enzymes family. In terms of assembly, homodimer. Heterodimer of two related subunits in NAD-MEH complex. Interacts with NAD-ME1. Mg(2+) is required as a cofactor. It depends on Mn(2+) as a cofactor. Expressed in leaves, stems, flowers, and roots (at protein level). Present in pollen.

The protein localises to the mitochondrion. The enzyme catalyses (S)-malate + NAD(+) = pyruvate + CO2 + NADH. Its activity is regulated as follows. Activated by 2-ketoglutarate, phosphoenolpyruvate (PEP), fructose 1,6-biphosphate (FBP) and coenzyme A (acetyl-CoA and CoA) as homodimer and by oxaloacetate (OAA), 2-ketoglutarate, succinate, fumarate and CoA as heterodimer NAD-MEH. Repressed by succinate and fumarate as homodimer, in the presence of NAD(+) and competitively toward the substrate L-malate. Involved in the regulation of sugars and amino acids metabolisms during the night period. The protein is NAD-dependent malic enzyme 2, mitochondrial (NAD-ME2) of Arabidopsis thaliana (Mouse-ear cress).